The chain runs to 25 residues: Alpha-amylase inhibitor (25 aa).

In terms of assembly, monomer or homodimer. Post-translationally, may exist both in a glycosylated and in an unglycosylated form.

It is found in the secreted. Functionally, inhibits alpha-amylases but not trypsin. Is more effective against insect alpha-amylases than those of mammals. In Secale cereale (Rye), this protein is Alpha-amylase inhibitor.